The chain runs to 299 residues: Rhodanese-like/PpiC domain-containing protein 12, chloroplastic (299 aa).

A chloroplast-targeting transit peptide spans M1–A81. S82 carries the post-translational modification N-acetylserine. Residues S93–S183 form the PpiC domain. The 93-residue stretch at F205–P297 folds into the Rhodanese domain. The active-site Cysteine persulfide intermediate is the C257.

It is found in the plastid. It localises to the chloroplast. This is Rhodanese-like/PpiC domain-containing protein 12, chloroplastic from Arabidopsis thaliana (Mouse-ear cress).